The sequence spans 677 residues: Pro-neuregulin-1, membrane-bound isoform (677 aa).

Residues 1 to 12 (MAEKKKVKEGKG) show a composition bias toward basic and acidic residues. 2 disordered regions span residues 1 to 43 (MAEK…KEIK) and 78 to 106 (GAKNKPDSKPEHIKIRGKKKSSELQISKA). At 1–260 (MAEKKKVKEG…MEAEELYQKR (260 aa)) the chain is on the extracellular side. Residues 13–24 (RKGKGKKDRKGK) show a composition bias toward basic residues. An Ig-like C2-type domain is found at 37-132 (PKLKEIKTQS…GNDTVTVNVT (96 aa)). Cys57 and Cys116 are joined by a disulfide. Residues 78–91 (GAKNKPDSKPEHIK) are compositionally biased toward basic and acidic residues. Residues Asn124 and Asn130 are each glycosylated (N-linked (GlcNAc...) asparagine). One can recognise an EGF-like domain in the interval 188 to 232 (HLIKCSDKEKTYCVNGGECYVLNGITSSNQFMCKCKPGFTGARCT). Intrachain disulfides connect Cys192–Cys206, Cys200–Cys220, and Cys222–Cys231. A helical membrane pass occupies residues 261-280 (VLTITGICIDLLVVGDMCVV). The Cytoplasmic segment spans residues 281 to 677 (DAYCKTKKQR…RKMTCKTLFI (397 aa)). The segment covering 294–315 (NDRLRQSLRERNKNITNKDNRP) has biased composition (basic and acidic residues). Disordered stretches follow at residues 294–326 (NDRLRQSLRERNKNITNKDNRPHNPKNPPPRKN), 350–375 (ETSFSTSHYTSTTHHSTTVTQTPSHS), 397–418 (SVENSRHTSPTGPRGRLNGIGG), 457–479 (VEFKTPISPKSPCLETSPPESSL), and 503–617 (PPRL…FLSI). Low complexity predominate over residues 351–375 (TSFSTSHYTSTTHHSTTVTQTPSHS). A compositionally biased stretch (polar residues) spans 397–407 (SVENSRHTSPT). Basic and acidic residues predominate over residues 505-515 (RLREKRYDRKT). Basic residues predominate over residues 568–578 (VNSRRQKRTKP). Residues 591-600 (DSSSESSTSE) show a composition bias toward low complexity.

This sequence belongs to the neuregulin family. In terms of processing, proteolytic cleavage close to the plasma membrane on the external face leads to the release of the soluble growth factor form. Extensive glycosylation precedes the proteolytic cleavage. As to expression, isoform alpha1 is expressed in brain and muscle. Isoform CRD is expressed in brain and spinal cord, but at very low level in muscle.

Its subcellular location is the cell membrane. The protein resides in the secreted. In terms of biological role, direct ligand for the ERBB tyrosine kinase receptors. Induces expression of acetylcholine receptor in synaptic nuclei. This Xenopus laevis (African clawed frog) protein is Pro-neuregulin-1, membrane-bound isoform (nrg1).